The sequence spans 494 residues: MSKEVVNTKAEASRVNALAAVRNYKVCPRLEYKTISGVQGPLVIIEDVKFPKYSEIVTIHLSDNTTRQGQILEVCGKKAVIQVFEGTSGIDNKNSYVEVSGDILKMPMSDEMLGRVFNGSGKPIDKGPNILADDYLDINGNPINPQCRVYPKEMIQTGISTIDVMNSIVRGQKIPLFSAAGLPHNEIGAQICRQASLVQGKDVLDHSDDNFAVVFGAMGVNMETARYFRQDFEENGKMERVCLFLNLANDPTIERILTPRIALTTAEYLAFEKEMHVFVILTDMSSYADALREVSSAREEVPGRRGYPGYMYSDLSTIYERAGRVEGRNGSITQFPILTMPNDDITHPIPDLTGYITEGQIFVDRNLYNRQIYPPINVLPSLSRLMKSGIGHNMTRIDHPYVSDQLYSNYAIAQDVKAMKAVIGEEALSNDDILYLEFLDKFEKRFITQNTYECRDIYQSLDIAWELLRIFPEDMLKKIKTDILSKYYPRHHAN.

This sequence belongs to the ATPase alpha/beta chains family. As to quaternary structure, V-ATPase is a heteromultimeric enzyme composed of a peripheral catalytic V1 complex (main components: subunits A, B, C, D, E, and F) attached to an integral membrane V0 proton pore complex (main component: the proteolipid protein).

Non-catalytic subunit of the peripheral V1 complex of vacuolar ATPase. V-ATPase is responsible for acidifying a variety of intracellular compartments in eukaryotic cells. The chain is V-type proton ATPase subunit B (VAPB) from Plasmodium falciparum.